The following is a 223-amino-acid chain: DNA mismatch repair protein MutH (223 aa).

The protein belongs to the MutH family.

Its subcellular location is the cytoplasm. Its function is as follows. Sequence-specific endonuclease that cleaves unmethylated GATC sequences. It is involved in DNA mismatch repair. The protein is DNA mismatch repair protein MutH of Shewanella oneidensis (strain ATCC 700550 / JCM 31522 / CIP 106686 / LMG 19005 / NCIMB 14063 / MR-1).